The primary structure comprises 440 residues: Xaa-Pro dipeptidase (440 aa).

Asp-244, Asp-255, His-335, Glu-380, and Glu-419 together coordinate Mn(2+).

It belongs to the peptidase M24B family. Bacterial-type prolidase subfamily. The cofactor is Mn(2+).

It catalyses the reaction Xaa-L-Pro dipeptide + H2O = an L-alpha-amino acid + L-proline. Splits dipeptides with a prolyl residue in the C-terminal position. This is Xaa-Pro dipeptidase from Shewanella halifaxensis (strain HAW-EB4).